We begin with the raw amino-acid sequence, 435 residues long: Methylenetetrahydrofolate--tRNA-(uracil-5-)-methyltransferase TrmFO (435 aa).

9-14 (GAGLAG) is an FAD binding site.

This sequence belongs to the MnmG family. TrmFO subfamily. Requires FAD as cofactor.

The protein localises to the cytoplasm. It catalyses the reaction uridine(54) in tRNA + (6R)-5,10-methylene-5,6,7,8-tetrahydrofolate + NADH + H(+) = 5-methyluridine(54) in tRNA + (6S)-5,6,7,8-tetrahydrofolate + NAD(+). It carries out the reaction uridine(54) in tRNA + (6R)-5,10-methylene-5,6,7,8-tetrahydrofolate + NADPH + H(+) = 5-methyluridine(54) in tRNA + (6S)-5,6,7,8-tetrahydrofolate + NADP(+). Functionally, catalyzes the folate-dependent formation of 5-methyl-uridine at position 54 (M-5-U54) in all tRNAs. The protein is Methylenetetrahydrofolate--tRNA-(uracil-5-)-methyltransferase TrmFO of Staphylococcus aureus (strain JH1).